A 335-amino-acid polypeptide reads, in one-letter code: Protein MET1, chloroplastic (335 aa).

Residues 1–18 (MSLAPSSYPSLYSSPSLP) show a composition bias toward low complexity. 2 disordered regions span residues 1–29 (MSLA…NPSL) and 66–88 (SETE…KYET). The N-terminal 73 residues, 1–73 (MSLAPSSYPS…KASETESSAK (73 aa)), are a transit peptide targeting the chloroplast. The segment covering 19 to 29 (RTQQTKQNPSL) has biased composition (polar residues). The segment covering 78–88 (GDGEEEEKYET) has biased composition (acidic residues). Residues 97 to 136 (YGLKFRKGRDGGTYIDAILPGGSADKTGKFTVGDRVIATS) enclose the PDZ domain. TPR repeat units lie at residues 217 to 250 (REKD…KPTP), 254 to 287 (SVAS…GYED), and 289 to 323 (KRIR…ESAI).

Interacts directly with stromal loops of photosystem II (PSII) core components psbB (CP47) and psbC (CP43). Associates with PSII subcomplexes formed during the PSII repair cycle (e.g. PSII dimers, PSII monomers, CP43-less PSII monomerand PSII reaction centers). Phosphorylated rapidly (e.g. within 5 minutes) but transiently at threonine and serine residues after wounding. As to expression, expressed in leaves (at protein level). Mostly expressed in leaves, stems and siliques, and, to a lower extent, in flowers and senescent leaves, but not present in roots (at protein level).

The protein resides in the plastid. Its subcellular location is the chloroplast membrane. The protein localises to the chloroplast thylakoid membrane. Involved in photosystem II supercomplex formation and repair, probably acting as a psbB/psbC chaperone on the stromal side of the membrane. The chain is Protein MET1, chloroplastic from Arabidopsis thaliana (Mouse-ear cress).